We begin with the raw amino-acid sequence, 224 residues long: Metalloproteinase inhibitor 4 (224 aa).

Residues 1–29 (MPQSPRPVPSWALLLRLLALLRPPGLGEA) form the signal peptide. Residue Cys-30 coordinates Zn(2+). 2 involved in metalloproteinase-binding regions span residues 30-33 (CSCA) and 99-100 (SS). Disulfide bonds link Cys-30-Cys-102, Cys-32-Cys-131, Cys-42-Cys-156, Cys-158-Cys-205, Cys-163-Cys-168, and Cys-176-Cys-197. One can recognise an NTR domain in the interval 30 to 156 (CSCAPAHPQQ…SLNHHYHLNC (127 aa)).

The protein belongs to the protease inhibitor I35 (TIMP) family.

It localises to the secreted. Its function is as follows. Complexes with metalloproteinases (such as collagenases) and irreversibly inactivates them by binding to their catalytic zinc cofactor. The sequence is that of Metalloproteinase inhibitor 4 (TIMP4) from Bos taurus (Bovine).